We begin with the raw amino-acid sequence, 564 residues long: Forkhead transcription factor HCM1 (564 aa).

Residues 33–80 form a disordered region; sequence DEKEMITPPSSTVRKTMKEVNKRPSHPLSPDHSSPIAPSKAKRQRSDT. Residues 58–67 show a composition bias toward low complexity; it reads HPLSPDHSSP. The segment at residues 108-199 is a DNA-binding region (fork-head); the sequence is KKPPYSYATL…KFFKGENRGY (92 aa). The span at 224-241 shows a compositional bias: acidic residues; sequence QVESGEGNDDLPDEEERE. The tract at residues 224-246 is disordered; that stretch reads QVESGEGNDDLPDEEEREEAGKF. Position 342 is a phosphothreonine (Thr-342). The tract at residues 401 to 448 is disordered; the sequence is SKPQSQQSYSNSQLPPPPSSHGSDLLKTPKMRHSDGLEKTPSRLISTP. The span at 402-413 shows a compositional bias: polar residues; it reads KPQSQQSYSNSQ. A compositionally biased stretch (basic and acidic residues) spans 432 to 441; the sequence is RHSDGLEKTP. A Phosphoserine modification is found at Ser-496. Residues 536–564 form a disordered region; the sequence is SDGNNTTDSNQKHHPYHNHPSNDSGNEKN. Residues 554 to 564 are compositionally biased toward polar residues; it reads HPSNDSGNEKN.

In terms of processing, phosphorylated by CDK1.

It is found in the cytoplasm. Its subcellular location is the nucleus. In terms of biological role, transcription factor regulating the cell cycle specific transcription of a spindle pole body (SPB) calmodulin binding protein SPC110. Required for full induction of SPC110 transcription in late G1. Binds to DNA consensus sequence 5'-[AT]AA[TC]AAACAA[AT]-3'. Dosage dependent suppressor of calmodulin mutants which have specific defects in SPB assembly. The protein is Forkhead transcription factor HCM1 (HCM1) of Saccharomyces cerevisiae (strain ATCC 204508 / S288c) (Baker's yeast).